The following is a 146-amino-acid chain: UPF0178 protein BcerKBAB4_2842 (146 aa).

The protein belongs to the UPF0178 family.

The polypeptide is UPF0178 protein BcerKBAB4_2842 (Bacillus mycoides (strain KBAB4) (Bacillus weihenstephanensis)).